The following is a 37-amino-acid chain: Large ribosomal subunit protein bL36 (37 aa).

Belongs to the bacterial ribosomal protein bL36 family.

The chain is Large ribosomal subunit protein bL36 from Janthinobacterium sp. (strain Marseille) (Minibacterium massiliensis).